The primary structure comprises 156 residues: Small ribosomal subunit protein uS7 (156 aa).

Belongs to the universal ribosomal protein uS7 family. As to quaternary structure, part of the 30S ribosomal subunit. Contacts proteins S9 and S11.

Functionally, one of the primary rRNA binding proteins, it binds directly to 16S rRNA where it nucleates assembly of the head domain of the 30S subunit. Is located at the subunit interface close to the decoding center, probably blocks exit of the E-site tRNA. The sequence is that of Small ribosomal subunit protein uS7 (rspG) from Streptomyces coelicolor (strain ATCC BAA-471 / A3(2) / M145).